A 37-amino-acid chain; its full sequence is Large ribosomal subunit protein bL36c (37 aa).

It belongs to the bacterial ribosomal protein bL36 family.

Its subcellular location is the plastid. It localises to the chloroplast. In Mesembryanthemum crystallinum (Common ice plant), this protein is Large ribosomal subunit protein bL36c.